The primary structure comprises 233 residues: Superoxide dismutase [Mn] 3.3, mitochondrial (233 aa).

The N-terminal 29 residues, 1–29 (MALRTLASKNALSFALGGAARPSAESARG), are a transit peptide targeting the mitochondrion. Mn(2+) is bound by residues His-57, His-105, Asp-194, and His-198.

It belongs to the iron/manganese superoxide dismutase family. As to quaternary structure, homotetramer. Mn(2+) serves as cofactor. As to expression, predominantly expressed in the embryo late in embryogenesis.

The protein resides in the mitochondrion matrix. It catalyses the reaction 2 superoxide + 2 H(+) = H2O2 + O2. Destroys superoxide anion radicals which are normally produced within the cells and which are toxic to biological systems. The polypeptide is Superoxide dismutase [Mn] 3.3, mitochondrial (SODA.2) (Zea mays (Maize)).